A 494-amino-acid chain; its full sequence is E3 ubiquitin-protein ligase ari-1.1 (494 aa).

The segment covering 1 to 30 has biased composition (acidic residues); that stretch reads MSSDDEINMDDSDSSQGEIDDGCMSDDDGI. The disordered stretch occupies residues 1–52; it reads MSSDDEINMDDSDSSQGEIDDGCMSDDDGIVLESREQNSSDYKDNGEPDNEV. The span at 33–52 shows a compositional bias: basic and acidic residues; it reads ESREQNSSDYKDNGEPDNEV. Positions 124-331 are TRIAD supradomain; the sequence is GDAECDICCS…SSWYSCNRFD (208 aa). Zn(2+) is bound by residues cysteine 128, cysteine 131, cysteine 142, histidine 144, cysteine 147, cysteine 150, cysteine 169, cysteine 174, cysteine 214, cysteine 219, cysteine 235, cysteine 237, cysteine 242, cysteine 245, histidine 250, cysteine 255, cysteine 282, and cysteine 285. The RING-type 1 zinc-finger motif lies at 128-174; that stretch reads CDICCSLGELSGLSCNHRACTQCWKAYLTNKIANNAQSEIECMAPNC. The IBR-type zinc-finger motif lies at 194-255; sequence ATYRKLIVAS…GHDWHEPVNC (62 aa). The segment at 282–313 adopts an RING-type 2; atypical zinc-finger fold; the sequence is CPKCMITIEKDGGCNHMTCKNTACRFEFCWMC. The active site involves cysteine 295. The Zn(2+) site is built by cysteine 300, cysteine 305, cysteine 310, cysteine 313, histidine 320, and cysteine 327. The ariadne domain stretch occupies residues 346-494; the sequence is RANLQRYLFY…ADQELWVFNE (149 aa).

Belongs to the RBR family. Ariadne subfamily. Interacts with ubiquitin-conjugating enzyme E2 ubc-18.

The protein resides in the nucleus. Its subcellular location is the cytoplasm. It catalyses the reaction [E2 ubiquitin-conjugating enzyme]-S-ubiquitinyl-L-cysteine + [acceptor protein]-L-lysine = [E2 ubiquitin-conjugating enzyme]-L-cysteine + [acceptor protein]-N(6)-ubiquitinyl-L-lysine.. Its activity is regulated as follows. Autoinhibited by the ariadne domain, which masks the second RING-type zinc finger that contains the active site and inhibits the E3 activity. Its function is as follows. E3 ubiquitin-protein transferase, which catalyzes ubiquitination of target proteins together with ubiquitin-conjugating enzyme E2 ubc-18. Acts with ubc-18 to regulate pharyngeal development. In Caenorhabditis elegans, this protein is E3 ubiquitin-protein ligase ari-1.1.